A 644-amino-acid polypeptide reads, in one-letter code: NADH-ubiquinone oxidoreductase chain 5 (644 aa).

The next 18 membrane-spanning stretches (helical) occupy residues 4 to 23, 30 to 49, 78 to 100, 112 to 129, 133 to 155, 167 to 189, 199 to 221, 234 to 256, 271 to 293, 300 to 322, 327 to 349, 361 to 383, 398 to 420, 466 to 488, 517 to 539, 546 to 568, 594 to 616, and 623 to 642; these read FITL…RYIG, LNII…YINI, DLLS…IFAW, FYTY…LVLG, LILF…FWYN, LFIN…YIYK, LVSY…AASA, WAMA…IAGI, NILL…IAIN, IIAL…SSYN, HVLC…IHSL, GLLI…LMGL, SSIG…SSLL, SWMA…YLLQ, INIY…IIYL, LLYI…RFLF, GFLY…FNII, and FNHY…YLQF.

This sequence belongs to the complex I subunit 5 family.

Its subcellular location is the mitochondrion inner membrane. It catalyses the reaction a ubiquinone + NADH + 5 H(+)(in) = a ubiquinol + NAD(+) + 4 H(+)(out). In terms of biological role, core subunit of the mitochondrial membrane respiratory chain NADH dehydrogenase (Complex I) that is believed to belong to the minimal assembly required for catalysis. Complex I functions in the transfer of electrons from NADH to the respiratory chain. The immediate electron acceptor for the enzyme is believed to be ubiquinone. This is NADH-ubiquinone oxidoreductase chain 5 (ND5) from Wickerhamomyces canadensis (Yeast).